The following is a 197-amino-acid chain: Peptide deformylase (197 aa).

C106 and H148 together coordinate Fe cation. E149 is an active-site residue. Position 152 (H152) interacts with Fe cation.

Belongs to the polypeptide deformylase family. Fe(2+) is required as a cofactor.

The catalysed reaction is N-terminal N-formyl-L-methionyl-[peptide] + H2O = N-terminal L-methionyl-[peptide] + formate. In terms of biological role, removes the formyl group from the N-terminal Met of newly synthesized proteins. Requires at least a dipeptide for an efficient rate of reaction. N-terminal L-methionine is a prerequisite for activity but the enzyme has broad specificity at other positions. The sequence is that of Peptide deformylase from Mycolicibacterium vanbaalenii (strain DSM 7251 / JCM 13017 / BCRC 16820 / KCTC 9966 / NRRL B-24157 / PYR-1) (Mycobacterium vanbaalenii).